Consider the following 961-residue polypeptide: Phosphofurin acidic cluster sorting protein 1 (961 aa).

Positions 1-19 (MAERGGAGGGPGGAGGGSS) are enriched in gly residues. Disordered regions lie at residues 1 to 70 (MAER…SSST) and 76 to 95 (VAVA…RTPA). Residue Ala-2 is modified to N-acetylalanine. Low complexity predominate over residues 20 to 30 (QRGSGVAQSPQ). Residue Ser-28 is modified to Phosphoserine. Residues 31–46 (QQPPQQPSQPQQPTPP) show a composition bias toward pro residues. A Phosphothreonine modification is found at Thr-44. Positions 51 to 70 (ATSSSSSTSAAAASSSSSST) are enriched in low complexity. Tyr-249 carries the post-translational modification Phosphotyrosine. Basic and acidic residues predominate over residues 260–271 (GIKSKLSDRSPD). Disordered stretches follow at residues 260-297 (GIKS…LHGQ) and 375-426 (NPSD…GKDT). Positions 274 to 291 (NYSEEEEESFSSEQEGSD) are enriched in acidic residues. A coiled-coil region spans residues 351 to 375 (HVSREQIREVEEDLDELYDSLEMYN). Phosphoserine occurs at positions 377 and 379. Residues 404–426 (MSQSSSQTEIGSLNSKGSLGKDT) show a composition bias toward polar residues. Residues Ser-428 and Ser-493 each carry the phosphoserine modification. 2 disordered regions span residues 475–540 (EKVK…HSTQ) and 758–802 (SPST…SMSS). Thr-502 is subject to Phosphothreonine. Phosphoserine occurs at positions 517, 526, 527, 529, and 532. Low complexity predominate over residues 768–802 (SPVVSLTVPSTSPPSSSGLSRDATATPPSSPSMSS).

The protein belongs to the PACS family. In terms of assembly, associates with AP-1 and AP-3 but not with AP-2 complexes. Interacts with FURIN. Forms a ternary complex with furin and AP-1. Interacts with PKD2 (via acidic region). Interacts with SORL1. Interacts with WDR37.

The protein resides in the golgi apparatus. Its subcellular location is the trans-Golgi network. Functionally, coat protein that is involved in the localization of trans-Golgi network (TGN) membrane proteins that contain acidic cluster sorting motifs. Controls the endosome-to-Golgi trafficking of furin and mannose-6-phosphate receptor by connecting the acidic-cluster-containing cytoplasmic domain of these molecules with the adapter-protein complex-1 (AP-1) of endosomal clathrin-coated membrane pits. Required for normal ER Ca2+ handling in lymphocytes. Together with WDR37, it plays an essential role in lymphocyte development, quiescence and survival. Required for stabilizing peripheral lymphocyte populations. The protein is Phosphofurin acidic cluster sorting protein 1 (Pacs1) of Rattus norvegicus (Rat).